The sequence spans 154 residues: UPF0225 protein Asuc_0343 (154 aa).

The protein belongs to the UPF0225 family.

The protein is UPF0225 protein Asuc_0343 of Actinobacillus succinogenes (strain ATCC 55618 / DSM 22257 / CCUG 43843 / 130Z).